The primary structure comprises 105 residues: uncharacterized protein (105 aa).

Its subcellular location is the mitochondrion. This is an uncharacterized protein from Paramecium tetraurelia.